Consider the following 1870-residue polypeptide: MARWIPTKRQKYGVAIYNYNASQDVELSLQIGDTVHILEMYEGWYRGYTLQNKSKKGIFPETYIHLKEATVEDLGQHETVIPGELPLVQELTSTLREWAVIWRKLYVNNKLTLFRQLQQMTYSLIEWRSQILSGTLPKDELAELKKKVTAKIDHGNRMLGLDLVVRDDNGNILDPDETSTIALFKAHEVASKRIEEKIQEEKSILQNLDLRGQSIFSTIHTYGLYVNFKNFVCNIGEDAELFMALYDPDQSTFISENYLIRWGSNGMPKEIEKLNNLQAVFTDLSSMDLIRPRVSLVCQIVRVGHMELKEGKKHTCGLRRPFGVAVMDITDIIHGKVDDEEKQHFIPFQQIAMETYIRQRQLIMSPLITSHVIGENEPLTSVLNKVIAAKEVNHKGQGLWVSLKLLPGDLTQVQKNFSHLVDRSTAIARKMGFPEIILPGDVRNDIYVTLIHGEFDKGKKKTPKNVEVTMSVHDEEGKLLEKAIHPGAGYEGISEYKSVVYYQVKQPCWYETVKVSIAIEEVTRCHIRFTFRHRSSQETRDKSERAFGVAFVKLMNPDGTTLQDGRHDLVVYKGDNKKMEDAKFYLTLPGTKMEMEEKELQASKNLVTFTPSKDSTKDSFQIATLICSTKLTQNVDLLGLLNWRSNSQNIKHNLKKLMEVDGGEIVKFLQDTLDALFNIMMEMSDSETYDFLVFDALVFIISLIGDIKFQHFNPVLETYIYKHFSATLAYVKLSKVLNFYVANADDSSKTELLFAALKALKYLFRFIIQSRVLYLRFYGQSKDGDEFNNSIRQLFLAFNMLMDRPLEEAVKIKGAALKYLPSIINDVKLVFDPVELSVLFCKFIQSIPDNQLVRQKLNCMTKIVESTLFRQSECREVLLPLLTDQLSGQLDDNSNKPDHEASSQLLSNILEVLDRKDVGATAVHIQLIMERLLRRINRTVIGMNRQSPHIGSFVACMIALLQQMDDSHYSHYISTFKTRQDIIDFLMETFIMFKDLIGKNVYAKDWMVMNMTQNRVFLRAINQFAEVLTRFFMDQASFELQLWNNYFHLAVAFLTHESLQLETFSQAKRNKIVKKYGDMRKEIGFRIRDMWYNLGPHKIKFIPSMVGPILEVTLTPEVELRKATIPIFFDMMQCEFNFSGNGNFHMFENELITKLDQEVEGGRGDEQYKVLLEKLLLEHCRKHKYLSSSGEVFALLVSSLLENLLDYRTIIMQDESKENRMSCTVNVLNFYKEKKREDIYIRYLYKLRDLHRDCENYTEAAYTLLLHAELLQWSDKPCVPHLLQKDSYYVYTQQELKEKLYQEIISYFDKGKMWEKAIKLSKELAETYESKVFDYEGLGNLLKKRASFYENIIKAMRPQPEYFAVGYYGQGFPSFLRNKIFIYRGKEYERREDFSLRLLTQFPNAEKMTSTTPPGEDIKSSPKQYMQCFTVKPVMSLPPSYKDKPVPEQILNYYRANEVQQFRYSRPFRKGEKDPDNEFATMWIERTTYTTAYTFPGILKWFEVKQISTEEISPLENAIETMELTNERISNCVQQHAWDRSLSVHPLSMLLSGIVDPAVMGGFSNYEKAFFTEKYLQEHPEDQEKVELLKRLIALQMPLLTEGIRIHGEKLTEQLKPLHERLSSCFRELKEKVEKHYGVITLPPNLTERKQSRTGSIVLPYIMSSTLRRLSITSVTSSVVSTSSNSSDNAPSRPGSDGSILEPLLERRASSGARVEDLSLREENSENRISKFKRKDWSLSKSQVIAEKAPEPDLMSPTRKAQRPKSLQLMDNRLSPFHGSSPPQSTPLSPPPLTPKATRTLSSPSLQTDGIAATPVPPPPPPKSKPYEGSQRNSTELAPPLPVRREAKAPPPPPPKARKSGIPTSEPGSQ.

In terms of domain architecture, SH3 spans 8-69 (KRQKYGVAIY…PETYIHLKEA (62 aa)). Ser-365 carries the phosphoserine modification. The C2 DOCK-type domain occupies 443–627 (RNDIYVTLIH…DSFQIATLIC (185 aa)). Position 818 is an N6-acetyllysine (Lys-818). The region spanning 1231 to 1642 (YKEKKREDIY…VEKHYGVITL (412 aa)) is the DOCKER domain. A disordered region spans residues 1679–1702 (VVSTSSNSSDNAPSRPGSDGSILE). Residues Ser-1756, Ser-1766, Ser-1785, and Ser-1789 each carry the phosphoserine modification. A disordered region spans residues 1772-1870 (NRLSPFHGSS…GIPTSEPGSQ (99 aa)). The segment covering 1784–1794 (QSTPLSPPPLT) has biased composition (pro residues). Thr-1794 is modified (phosphothreonine). Residues 1797–1808 (ATRTLSSPSLQT) are compositionally biased toward polar residues. Thr-1814 bears the Phosphothreonine mark. A compositionally biased stretch (pro residues) spans 1815–1824 (PVPPPPPPKS). A phosphoserine mark is found at Ser-1834 and Ser-1869.

Belongs to the DOCK family. Interacts with CRK and CRKL. Interacts (via N-terminus) with tensin TNS3 (via N-terminus); the interaction increases DOCK5 guanine nucleotide exchange activity towards Rac. Interacts with ELMO1.

The protein resides in the cytoplasm. It is found in the cell membrane. It localises to the cell projection. Its subcellular location is the podosome. Guanine nucleotide exchange factor (GEF) for Rho and Rac. GEF proteins activate small GTPases by exchanging bound GDP for free GTP. Along with DOCK1, mediates CRK/CRKL regulation of epithelial and endothelial cell spreading and migration on type IV collagen. The sequence is that of Dedicator of cytokinesis protein 5 (DOCK5) from Homo sapiens (Human).